Reading from the N-terminus, the 229-residue chain is Uracil-DNA glycosylase (229 aa).

D64 functions as the Proton acceptor in the catalytic mechanism.

This sequence belongs to the uracil-DNA glycosylase (UDG) superfamily. UNG family.

It localises to the cytoplasm. It carries out the reaction Hydrolyzes single-stranded DNA or mismatched double-stranded DNA and polynucleotides, releasing free uracil.. In terms of biological role, excises uracil residues from the DNA which can arise as a result of misincorporation of dUMP residues by DNA polymerase or due to deamination of cytosine. In Escherichia coli O7:K1 (strain IAI39 / ExPEC), this protein is Uracil-DNA glycosylase.